Consider the following 102-residue polypeptide: Large ribosomal subunit protein bL21 (102 aa).

This sequence belongs to the bacterial ribosomal protein bL21 family. In terms of assembly, part of the 50S ribosomal subunit. Contacts protein L20.

In terms of biological role, this protein binds to 23S rRNA in the presence of protein L20. The polypeptide is Large ribosomal subunit protein bL21 (Geobacillus thermodenitrificans (strain NG80-2)).